The primary structure comprises 349 residues: Histidinol-phosphate aminotransferase (349 aa).

An N6-(pyridoxal phosphate)lysine modification is found at Lys-210.

This sequence belongs to the class-II pyridoxal-phosphate-dependent aminotransferase family. Histidinol-phosphate aminotransferase subfamily. In terms of assembly, homodimer. Pyridoxal 5'-phosphate serves as cofactor.

The catalysed reaction is L-histidinol phosphate + 2-oxoglutarate = 3-(imidazol-4-yl)-2-oxopropyl phosphate + L-glutamate. It functions in the pathway amino-acid biosynthesis; L-histidine biosynthesis; L-histidine from 5-phospho-alpha-D-ribose 1-diphosphate: step 7/9. The sequence is that of Histidinol-phosphate aminotransferase from Flavobacterium johnsoniae (strain ATCC 17061 / DSM 2064 / JCM 8514 / BCRC 14874 / CCUG 350202 / NBRC 14942 / NCIMB 11054 / UW101) (Cytophaga johnsonae).